Reading from the N-terminus, the 351-residue chain is Probable glucuronosyltransferase Os10g0205300 (351 aa).

Over 1-11 (MAAPPCPPRRP) the chain is Cytoplasmic. A helical; Signal-anchor for type II membrane protein membrane pass occupies residues 12 to 32 (ISAPCFLLCFLLGFVAGLFPF). The Lumenal portion of the chain corresponds to 33–351 (AHRHLHLDLH…PLKKEARPLL (319 aa)). Residues 138-169 (SSPVPDAPQDRPRRRGRRQDRPAVDSRARQRN) form a disordered region. The segment covering 156–169 (QDRPAVDSRARQRN) has biased composition (basic and acidic residues). An N-linked (GlcNAc...) asparagine glycan is attached at Asn-259.

The protein belongs to the glycosyltransferase 43 family.

It is found in the golgi apparatus membrane. In terms of biological role, involved in the synthesis of glucuronoxylan hemicellulose in secondary cell walls. This chain is Probable glucuronosyltransferase Os10g0205300, found in Oryza sativa subsp. japonica (Rice).